Reading from the N-terminus, the 204-residue chain is 3,4-dihydroxy-2-butanone 4-phosphate synthase (204 aa).

E27 provides a ligand contact to Mg(2+). Position 31 (D31) interacts with D-ribulose 5-phosphate. C56 carries the S-glutathionyl cysteine modification. D-ribulose 5-phosphate contacts are provided by residues T82 and 140–144 (RDGHT). H143 serves as a coordination point for Mg(2+).

The protein belongs to the DHBP synthase family. As to quaternary structure, homodimer. The cofactor is Mg(2+). Mn(2+) serves as cofactor. In terms of processing, S-glutathionylation is reversible and dependent on a glutaredoxin.

The enzyme catalyses D-ribulose 5-phosphate = (2S)-2-hydroxy-3-oxobutyl phosphate + formate + H(+). Its pathway is cofactor biosynthesis; riboflavin biosynthesis; 2-hydroxy-3-oxobutyl phosphate from D-ribulose 5-phosphate: step 1/1. Catalyzes the conversion of D-ribulose 5-phosphate to formate and 3,4-dihydroxy-2-butanone 4-phosphate. The protein is 3,4-dihydroxy-2-butanone 4-phosphate synthase of Schizosaccharomyces pombe (strain 972 / ATCC 24843) (Fission yeast).